The primary structure comprises 181 residues: Large ribosomal subunit protein uL5 (181 aa).

The protein belongs to the universal ribosomal protein uL5 family. Part of the 50S ribosomal subunit; part of the 5S rRNA/L5/L18/L25 subcomplex. Contacts the 5S rRNA and the P site tRNA. Forms a bridge to the 30S subunit in the 70S ribosome.

Functionally, this is one of the proteins that bind and probably mediate the attachment of the 5S RNA into the large ribosomal subunit, where it forms part of the central protuberance. In the 70S ribosome it contacts protein S13 of the 30S subunit (bridge B1b), connecting the 2 subunits; this bridge is implicated in subunit movement. Contacts the P site tRNA; the 5S rRNA and some of its associated proteins might help stabilize positioning of ribosome-bound tRNAs. This chain is Large ribosomal subunit protein uL5, found in Sulfurimonas denitrificans (strain ATCC 33889 / DSM 1251) (Thiomicrospira denitrificans (strain ATCC 33889 / DSM 1251)).